Consider the following 491-residue polypeptide: Glutamyl-tRNA(Gln) amidotransferase subunit A (491 aa).

Active-site charge relay system residues include Lys76 and Ser154. The Acyl-ester intermediate role is filled by Ser178.

Belongs to the amidase family. GatA subfamily. In terms of assembly, heterotrimer of A, B and C subunits.

It catalyses the reaction L-glutamyl-tRNA(Gln) + L-glutamine + ATP + H2O = L-glutaminyl-tRNA(Gln) + L-glutamate + ADP + phosphate + H(+). Functionally, allows the formation of correctly charged Gln-tRNA(Gln) through the transamidation of misacylated Glu-tRNA(Gln) in organisms which lack glutaminyl-tRNA synthetase. The reaction takes place in the presence of glutamine and ATP through an activated gamma-phospho-Glu-tRNA(Gln). The sequence is that of Glutamyl-tRNA(Gln) amidotransferase subunit A from Cereibacter sphaeroides (strain ATCC 17023 / DSM 158 / JCM 6121 / CCUG 31486 / LMG 2827 / NBRC 12203 / NCIMB 8253 / ATH 2.4.1.) (Rhodobacter sphaeroides).